We begin with the raw amino-acid sequence, 482 residues long: MDRPIDDIVKNLLKFVVRGFYGGSFVLVLDAILFHSVLAEDDLKQLLSINKTELGPLIARLRSDRLISIHKQREYPPNSKSVERVYYYVKYPHAIDAIKWKVHQVVQRLKDDLDKNSEPNGYMCPICLTKYTQLEAVQLLNFDRTEFLCSLCDEPLVEDDSGKKNKEKQDKLNRLMDQIQPIIDSLKKIDDSRIEENTFEIALARLIPPQNQSHAAYTYNPKKGSTMFRPGDSAPLPNLMGTALGNDSSRRAGANSQATLHINITTASDEVAQRELQERQAEEKRKQNAVPEWHKQSTIGKTALGRLDNEEEFDPVVTASAMDSINPDNEPAQETSYQNNRTLTEQEMEERENEKTLNDYYAALAKKQAKLNKEEEEEEEEEEDEEEEEEEEMEDVMDDNDETARENALEDEFEDVTDTAGTAKTESNTSNDVKQESINDKTEDAVNATATASGPSANAKPNDGDDDDDDDDDEMDIEFEDV.

Residues 9–99 enclose the HTH TFE/IIEalpha-type domain; that stretch reads VKNLLKFVVR…KYPHAIDAIK (91 aa). The segment at 124–152 adopts a C4-type zinc-finger fold; that stretch reads CPICLTKYTQLEAVQLLNFDRTEFLCSLC. A compositionally biased stretch (basic and acidic residues) spans 274 to 286; it reads RELQERQAEEKRK. Disordered stretches follow at residues 274 to 295 and 321 to 482; these read RELQ…EWHK and AMDS…FEDV. Positions 321–345 are enriched in polar residues; it reads AMDSINPDNEPAQETSYQNNRTLTE. Positions 374 to 401 are enriched in acidic residues; it reads EEEEEEEEEEDEEEEEEEEMEDVMDDND. Polar residues predominate over residues 419–432; the sequence is TAGTAKTESNTSND. Residues 433 to 444 show a composition bias toward basic and acidic residues; sequence VKQESINDKTED. A compositionally biased stretch (acidic residues) spans 464–482; it reads GDDDDDDDDDEMDIEFEDV.

The protein belongs to the TFIIE alpha subunit family. In terms of assembly, TFIIE is a tetramer of two alpha (TFA1) and two beta (TFA2) subunits.

The protein localises to the nucleus. Recruits TFIIH to the initiation complex and stimulates the RNA polymerase II C-terminal domain kinase and DNA-dependent ATPase activities of TFIIH. Both TFIIH and TFIIE are required for promoter clearance by RNA polymerase. The polypeptide is Transcription initiation factor IIE subunit alpha (TFA1) (Saccharomyces cerevisiae (strain ATCC 204508 / S288c) (Baker's yeast)).